The following is a 156-amino-acid chain: Enhancer of split M1 protein (156 aa).

An N-terminal signal peptide occupies residues 1 to 19 (MMSQTLTLCCLALVACVYG). Kazal-like domains follow at residues 23 to 81 (STND…AWCS) and 96 to 156 (KLEV…EEKC). Disulfide bonds link C29–C62, C33–C55, C102–C135, C106–C128, and C114–C156.

The protein is Enhancer of split M1 protein (Kaz-m1) of Drosophila melanogaster (Fruit fly).